The sequence spans 389 residues: MKKLLKSALLFAATGSALSLQALPVGNPAEPSLLIDGTMWEGASGDPCDPCSTWCDAISIRAGYYGDYVFDRVLKVDVNKTITGMGAVPTGTAAANYKTPTDRPNIAYGKHLQDAEWFTNAAFLALNIWDRFDIFCTLGASNGYFKASSAAFNLVGLIGVKGSSIAADQLPNVGITQGIVEFYTDTTFSWSVGARGALWECGCATLGAEFQYAQSNPKIEMLNVVSSPAQFVVHKPRGYKGTAFPLPLTAGTDQATDTKSATIKYHEWQVGLALSYRLNMLVPYISVNWSRATFDADAIRIAQPKLAAAVLNLTTWNPTLLGEATALDTSNKFADFLQIASIQINKMKSRKACGVAVGATLIDADKWSITGEARLINERAAHMNAQFRF.

The signal sequence occupies residues 1 to 22 (MKKLLKSALLFAATGSALSLQA).

Belongs to the chlamydial porin (CP) (TC 1.B.2) family. Part of a disulfide cross-linked outer membrane complex (COMC) composed of the major outer membrane porin (MOMP), the small cysteine-rich protein (OmcA) and the large cysteine-rich periplasmic protein (OmcB).

It localises to the cell outer membrane. Its function is as follows. In elementary bodies (EBs, the infectious stage, which is able to survive outside the host cell) provides the structural integrity of the outer envelope through disulfide cross-links with the small cysteine-rich protein and the large cysteine-rich periplasmic protein. It has been described in publications as the Sarkosyl-insoluble COMC (Chlamydia outer membrane complex), and serves as the functional equivalent of peptidoglycan. In terms of biological role, permits diffusion of specific solutes through the outer membrane. The sequence is that of Major outer membrane porin (ompA) from Chlamydia abortus (strain DSM 27085 / S26/3) (Chlamydophila abortus).